The primary structure comprises 1638 residues: Chromatin-remodeling ATPase INO80 (1638 aa).

A disordered region spans residues 41 to 93 (SLRKPLSSDEETDDEHVVKREHDVQDSDDSSTVGVVRMKQSSKRKSRLLASKE). Residues Ser47 and Ser48 each carry the phosphoserine modification. Thr52 carries the phosphothreonine modification. Over residues 55–65 (EHVVKREHDVQ) the composition is skewed to basic and acidic residues. Residues Ser67 and Ser70 each carry the phosphoserine modification. Positions 136 to 161 (VQQLLREHVREQRQRKNYYKKAANAQ) form a coiled coil. The segment at 201 to 259 (RLAEAQAGPKPPKQRRRGRKKRDNMGSPESGEVPPSELGKYTFGDTLPNNEDDDEDGGE) is disordered. The segment covering 212 to 222 (PKQRRRGRKKR) has biased composition (basic residues). 2 positions are modified to phosphoserine: Ser227 and Ser230. Acidic residues predominate over residues 250 to 259 (NEDDDEDGGE). In terms of domain architecture, DBINO spans 313–438 (IWQIMSKKES…AHFMSKKLGQ (126 aa)). Residues 499–528 (KEKEEEEQAQESVEDIKPEPRPEMKDLPQP) form a disordered region. Positions 502–511 (EEEEQAQESV) are enriched in acidic residues. Over residues 512 to 526 (EDIKPEPRPEMKDLP) the composition is skewed to basic and acidic residues. The Helicase ATP-binding domain maps to 547–718 (ANIYDQGISG…WALLHFIMPT (172 aa)). 560-567 (DEMGLGKT) contributes to the ATP binding site. The region spanning 1160–1315 (VLDNLLTRLK…GGNFKPDTLK (156 aa)) is the Helicase C-terminal domain. 2 disordered regions span residues 1335–1364 (QEAKLQSSSPIPAATQSERKRRHPQKDVNM) and 1463–1638 (FLDD…VGPE). Residues 1338–1350 (KLQSSSPIPAATQ) show a composition bias toward polar residues. Residues 1473 to 1495 (MRRRHHPRGTRRGRPRGSTRRGG) show a composition bias toward basic residues. 2 stretches are compositionally biased toward low complexity: residues 1505–1534 (TPTQAATPAVPATASQAAAAGTGAAAGTSS) and 1618–1627 (SPATSRAPSP).

Belongs to the SNF2/RAD54 helicase family. Component of the chromatin remodeling Ino80 complex.

It localises to the nucleus. The enzyme catalyses ATP + H2O = ADP + phosphate + H(+). Its function is as follows. ATPase component of the chromatin remodeling INO80 complex which is involved in transcriptional regulation, DNA replication and DNA repair. Binds DNA. As part of the INO80 complex, remodels chromatin by shifting nucleosomes. The sequence is that of Chromatin-remodeling ATPase INO80 from Drosophila melanogaster (Fruit fly).